Consider the following 886-residue polypeptide: Alanine--tRNA ligase (886 aa).

4 residues coordinate Zn(2+): His564, His568, Cys676, and His680.

Belongs to the class-II aminoacyl-tRNA synthetase family. Zn(2+) serves as cofactor.

It is found in the cytoplasm. It carries out the reaction tRNA(Ala) + L-alanine + ATP = L-alanyl-tRNA(Ala) + AMP + diphosphate. Functionally, catalyzes the attachment of alanine to tRNA(Ala) in a two-step reaction: alanine is first activated by ATP to form Ala-AMP and then transferred to the acceptor end of tRNA(Ala). Also edits incorrectly charged Ser-tRNA(Ala) and Gly-tRNA(Ala) via its editing domain. The polypeptide is Alanine--tRNA ligase (Bartonella bacilliformis (strain ATCC 35685 / KC583 / Herrer 020/F12,63)).